The sequence spans 1130 residues: MKRSEKPEGYRQMRPKTFPASNYTVSSRQMLQEIRESLRNLSKPSDAAKAEHNMSKMSTEDPRQVRNPPKFGTHHKALQEIRNSLLPFANETNSSRSTSEVNPQMLQDLQAAGFDEDMVIQALQKTNNRSIEAAIEFISKMSYQDPRREQMAAAAARPINASMKPGNVQQSVNRKQSWKGSKESLVPQRHGPPLGESVAYHSESPNSQTDVGRPLSGSGISAFVQAHPSNGQRVNPPPPPQVRSVTPPPPPRGQTPPPRGTTPPPPSWEPNSQTKRYSGNMEYVISRISPVPPGAWQEGYPPPPLNTSPMNPPNQGQRGISSVPVGRQPIIMQSSSKFNFPSGRPGMQNGTGQTDFMIHQNVVPAGTVNRQPPPPYPLTAANGQSPSALQTGGSAAPSSYTNGSIPQSMMVPNRNSHNMELYNISVPGLQTNWPQSSSAPAQSSPSSGHEIPTWQPNIPVRSNSFNNPLGNRASHSANSQPSATTVTAITPAPIQQPVKSMRVLKPELQTALAPTHPSWIPQPIQTVQPSPFPEGTASNVTVMPPVAEAPNYQGPPPPYPKHLLHQNPSVPPYESISKPSKEDQPSLPKEDESEKSYENVDSGDKEKKQITTSPITVRKNKKDEERRESRIQSYSPQAFKFFMEQHVENVLKSHQQRLHRKKQLENEMMRVGLSQDAQDQMRKMLCQKESNYIRLKRAKMDKSMFVKIKTLGIGAFGEVCLARKVDTKALYATKTLRKKDVLLRNQVAHVKAERDILAEADNEWVVRLYYSFQDKDNLYFVMDYIPGGDMMSLLIRMGIFPESLARFYIAELTCAVESVHKMGFIHRDIKPDNILIDRDGHIKLTDFGLCTGFRWTHDSKYYQSGDHPRQDSMDFSNEWGDPSSCRCGDRLKPLERRAARQHQRCLAHSLVGTPNYIAPEVLLRTGYTQLCDWWSVGVILFEMLVGQPPFLAQTPLETQMKVINWQTSLHIPPQAKLSPEASDLIIKLCRGPEDRLGKNGADEIKAHPFFKTIDFSSDLRQQSASYIPKITHPTDTSNFDPVDPDKLWSDDNEEENVNDTLNGWYKNGKHPEHAFYEFTFRRFFDDNGYPYNYPKPIEYEYINSQGSEQQSDEDDQNTGSEIKNRDLVYV.

A compositionally biased stretch (basic and acidic residues) spans 1–11 (MKRSEKPEGYR). The segment at 1–71 (MKRSEKPEGY…PRQVRNPPKF (71 aa)) is disordered. Polar residues predominate over residues 19 to 30 (PASNYTVSSRQM). A compositionally biased stretch (basic and acidic residues) spans 46 to 64 (DAAKAEHNMSKMSTEDPRQ). The 42-residue stretch at 100 to 141 (EVNPQMLQDLQAAGFDEDMVIQALQKTNNRSIEAAIEFISKM) folds into the UBA domain. The tract at residues 149–276 (EQMAAAAARP…SWEPNSQTKR (128 aa)) is disordered. The span at 167–179 (NVQQSVNRKQSWK) shows a compositional bias: polar residues. Over residues 235–268 (NPPPPPQVRSVTPPPPPRGQTPPPRGTTPPPPSW) the composition is skewed to pro residues. Thr-246 carries the post-translational modification Phosphothreonine. Phosphoserine is present on Ser-278. Disordered regions lie at residues 294 to 321 (GAWQ…RGIS), 365 to 405 (AGTV…NGSI), 432 to 484 (NWPQ…PSAT), and 515 to 631 (THPS…ESRI). Residues 300–312 (YPPPPLNTSPMNP) show a composition bias toward pro residues. A PPxY motif 1 motif is present at residues 373-376 (PPPY). Positions 381-405 (ANGQSPSALQTGGSAAPSSYTNGSI) are enriched in polar residues. Residues 434-447 (PQSSSAPAQSSPSS) are compositionally biased toward low complexity. Residues 454-482 (WQPNIPVRSNSFNNPLGNRASHSANSQPS) are compositionally biased toward polar residues. A Phosphoserine; by NUAK1 and NUAK2 modification is found at Ser-464. An interaction with YAP1 region spans residues 526–655 (TVQPSPFPEG…HVENVLKSHQ (130 aa)). The PPxY motif 2 signature appears at 556–559 (PPPY). Residues 579 to 609 (PSKEDQPSLPKEDESEKSYENVDSGDKEKKQ) show a composition bias toward basic and acidic residues. Ser-613 is subject to Phosphoserine. The span at 621–630 (KKDEERRESR) shows a compositional bias: basic and acidic residues. Ser-674 is modified (phosphoserine). The Protein kinase domain maps to 705–1010 (FVKIKTLGIG…ADEIKAHPFF (306 aa)). Residues 711–719 (LGIGAFGEV) and Lys-734 contribute to the ATP site. The active-site Proton acceptor is the Asp-828. Phosphoserine; by STK3/MST2 is present on Ser-909. The AGC-kinase C-terminal domain occupies 1011-1090 (KTIDFSSDLR…RRFFDDNGYP (80 aa)). Thr-1079 carries the post-translational modification Phosphothreonine; by STK3/MST2. The interval 1104–1130 (SQGSEQQSDEDDQNTGSEIKNRDLVYV) is disordered.

This sequence belongs to the protein kinase superfamily. AGC Ser/Thr protein kinase family. Complexes with CDK1 in early mitosis. LATS1-associated CDK1 has no mitotic cyclin partner and no apparent kinase activity. Binds phosphorylated ZYX, locating this protein to the mitotic spindle and suggesting a role for actin regulatory proteins during mitosis. Binds to and colocalizes with LIMK1 at the actomyosin contractile ring during cytokinesis. Interacts (via PPxY motif 2) with YAP1 (via WW domains). Interacts with MOB1A and MOB1B. Interacts with LIMD1, WTIP and AJUBA. Interacts with ESR1, DCAF1 and DCAF13; probably recruits DCAF1 and DCAF13 to ESR1 to promote ESR1 ubiquitination and ubiquitin-mediated proteasomal degradation. Interacts with STK3/MST2; this interaction is inhibited in the presence of DLG5. Interacts with SCRIB in the presence of DLG5. Interacts with WWTR1/TAZ. Interacts with WWC1, WWC2 and WWC3 (via their WW domains). The cofactor is Mg(2+). Post-translationally, autophosphorylated and phosphorylated during M-phase of the cell cycle. Phosphorylated by STK3/MST2 at Ser-909 and Thr-1079, which results in its activation. Phosphorylated by MAP4Ks; in parallel to STK3/MST2 and resulting to its activation. Phosphorylation at Ser-464 by NUAK1 and NUAK2 leads to decreased protein level and is required to regulate cellular senescence and cellular ploidy. As to expression, expressed in all adult tissues examined except for lung and kidney.

The protein resides in the cytoplasm. It localises to the cytoskeleton. The protein localises to the microtubule organizing center. Its subcellular location is the centrosome. It is found in the spindle. The protein resides in the midbody. It localises to the spindle pole body. It catalyses the reaction L-seryl-[protein] + ATP = O-phospho-L-seryl-[protein] + ADP + H(+). The enzyme catalyses L-threonyl-[protein] + ATP = O-phospho-L-threonyl-[protein] + ADP + H(+). Its function is as follows. Negative regulator of YAP1 in the Hippo signaling pathway that plays a pivotal role in organ size control and tumor suppression by restricting proliferation and promoting apoptosis. The core of this pathway is composed of a kinase cascade wherein STK3/MST2 and STK4/MST1, in complex with its regulatory protein SAV1, phosphorylates and activates LATS1/2 in complex with its regulatory protein MOB1, which in turn phosphorylates and inactivates YAP1 oncoprotein and WWTR1/TAZ. Phosphorylation of YAP1 by LATS1 inhibits its translocation into the nucleus to regulate cellular genes important for cell proliferation, cell death, and cell migration. Acts as a tumor suppressor which plays a critical role in maintenance of ploidy through its actions in both mitotic progression and the G1 tetraploidy checkpoint. Negatively regulates G2/M transition by down-regulating CDK1 kinase activity. Involved in the control of p53 expression. Affects cytokinesis by regulating actin polymerization through negative modulation of LIMK1. May also play a role in endocrine function. Plays a role in mammary gland epithelial cell differentiation, both through the Hippo signaling pathway and the intracellular estrogen receptor signaling pathway by promoting the degradation of ESR1. Acts as an activator of the NLRP3 inflammasome by mediating phosphorylation of 'Ser-265' of NLRP3 following NLRP3 palmitoylation, promoting NLRP3 activation by NEK7. This Homo sapiens (Human) protein is Serine/threonine-protein kinase LATS1.